The chain runs to 287 residues: Rhomboid-like protein 18 (287 aa).

The next 6 helical transmembrane spans lie at 10 to 30 (NAPV…FFGI), 53 to 73 (LIIS…LYLL), 90 to 110 (VFIF…LSLT), 117 to 137 (LLTS…FLDI), 145 to 165 (VLGV…QLLL), and 172 to 192 (IFTG…IFGI). The UBA domain maps to 244–284 (EPSEEAIATLVSMGFDQNAARQALVHARNDVNAATNILLEA).

The protein belongs to the peptidase S54 family.

The protein resides in the membrane. Functionally, probable rhomboid-type serine protease that catalyzes intramembrane proteolysis. This is Rhomboid-like protein 18 from Arabidopsis thaliana (Mouse-ear cress).